Consider the following 236-residue polypeptide: 2-C-methyl-D-erythritol 4-phosphate cytidylyltransferase (236 aa).

It belongs to the IspD/TarI cytidylyltransferase family. IspD subfamily. Homodimer.

The enzyme catalyses 2-C-methyl-D-erythritol 4-phosphate + CTP + H(+) = 4-CDP-2-C-methyl-D-erythritol + diphosphate. It participates in isoprenoid biosynthesis; isopentenyl diphosphate biosynthesis via DXP pathway; isopentenyl diphosphate from 1-deoxy-D-xylulose 5-phosphate: step 2/6. Functionally, catalyzes the formation of 4-diphosphocytidyl-2-C-methyl-D-erythritol from CTP and 2-C-methyl-D-erythritol 4-phosphate (MEP). The polypeptide is 2-C-methyl-D-erythritol 4-phosphate cytidylyltransferase (Salmonella arizonae (strain ATCC BAA-731 / CDC346-86 / RSK2980)).